The following is a 2208-amino-acid chain: RNA-directed RNA polymerase L (2208 aa).

The interval 26 to 284 (KDALLSQVHP…LHQDSDTINC (259 aa)) is endonuclease. The Mn(2+) site is built by glutamate 51, aspartate 89, and glutamate 102. Lysine 115 is an active-site residue. In terms of domain architecture, RdRp catalytic spans 1171 to 1367 (CDMKMAVNNG…YLSSKLNKFV (197 aa)). A Mg(2+)-binding site is contributed by aspartate 1329.

It belongs to the Bunyavirales RNA polymerase family. As to quaternary structure, homomultimer; the oligomeric structure is essential for the polymerase activity. Interacts with nucleoprotein N. Interacts with protein Z; this interaction inhibits viral transcription and replication, Z partially blocks the product exit tunnel for the releasing nascent RNA product. The cofactor is Mn(2+). Mg(2+) is required as a cofactor.

Its subcellular location is the virion. It is found in the host cytoplasm. The enzyme catalyses RNA(n) + a ribonucleoside 5'-triphosphate = RNA(n+1) + diphosphate. In terms of biological role, RNA-dependent RNA polymerase, which is responsible for the replication and transcription of the viral RNA genome using antigenomic RNA as an intermediate. During transcription, synthesizes subgenomic RNAs and assures their capping by a cap-snatching mechanism, which involves the endonuclease activity cleaving the host capped pre-mRNAs. These short capped RNAs are then used as primers for viral transcription. The 3'-end of subgenomic mRNAs molecules are heterogeneous and not polyadenylated. The replicase function is to direct synthesis of antigenomic and genomic RNA which are encapsidated and non capped. As a consequence of the use of the same enzyme for both transcription and replication, these mechanisms need to be well coordinated. These processes may be regulated by proteins N and Z in a dose-dependent manner. Z protein inhibits the viral polymerase L und thus the viral transcription and RNA synthesis. This chain is RNA-directed RNA polymerase L, found in Homo sapiens (Human).